We begin with the raw amino-acid sequence, 162 residues long: Ribosome maturation factor RimM (162 aa).

A PRC barrel domain is found at E86–L160.

Belongs to the RimM family. In terms of assembly, binds ribosomal protein uS19.

It localises to the cytoplasm. Functionally, an accessory protein needed during the final step in the assembly of 30S ribosomal subunit, possibly for assembly of the head region. Essential for efficient processing of 16S rRNA. May be needed both before and after RbfA during the maturation of 16S rRNA. It has affinity for free ribosomal 30S subunits but not for 70S ribosomes. The sequence is that of Ribosome maturation factor RimM from Thermus thermophilus (strain ATCC BAA-163 / DSM 7039 / HB27).